A 283-amino-acid chain; its full sequence is Bis(5'-nucleosyl)-tetraphosphatase, symmetrical (283 aa).

It belongs to the Ap4A hydrolase family.

The catalysed reaction is P(1),P(4)-bis(5'-adenosyl) tetraphosphate + H2O = 2 ADP + 2 H(+). Its function is as follows. Hydrolyzes diadenosine 5',5'''-P1,P4-tetraphosphate to yield ADP. The chain is Bis(5'-nucleosyl)-tetraphosphatase, symmetrical from Serratia proteamaculans (strain 568).